The chain runs to 330 residues: MAYHTPFAAQPPVASSGLPLTLISLDDWALVTLTGADRVKYLQGQVTADIDALSADQHVLCAHCDAKGKMWSNLRLFYRGEGLAFIERRSLLDNQLSELKKYAVFSKVVIEPQPDAVLIGVAGSQAKTALAEIFTELPSTEHPVTQMGNSTLLHFSLPAERFLLVTDTEQAQQLVEKLAGRAQFNDSKQWLALDIEAGFPIIDAANSAQFIPQATNIQALNGISFTKGCYTGQEMVARAKYRGANKRALYWLAGNASRVPAAGEDLEWQLGENWRRTGTVLSAIQLNDGTVWVQAVLNNDLAADSVLRVRDDALGTLAIQPLPYSLAEDK.

Positions 28 and 190 each coordinate folate.

It belongs to the tRNA-modifying YgfZ family.

It localises to the cytoplasm. Folate-binding protein involved in regulating the level of ATP-DnaA and in the modification of some tRNAs. It is probably a key factor in regulatory networks that act via tRNA modification, such as initiation of chromosomal replication. This Yersinia pseudotuberculosis serotype IB (strain PB1/+) protein is tRNA-modifying protein YgfZ.